We begin with the raw amino-acid sequence, 225 residues long: Paired immunoglobulin-like type 2 receptor beta-2 (225 aa).

A signal peptide spans 1–31; sequence MALLISLPGETPAMAQILLLLSSACLHAGNS. Residues 32–195 are Extracellular-facing; it reads ARSNGGNDFG…NPSLMNLGAM (164 aa). N-linked (GlcNAc...) asparagine glycans are attached at residues N90, N107, and N160. The chain crosses the membrane as a helical span at residues 196-216; sequence VTMLLAKVVVIILVYGWMIFL. Topologically, residues 217–225 are cytoplasmic; the sequence is RWKQRPDPA.

The protein resides in the membrane. Functionally, paired receptors consist of highly related activating and inhibitory receptors and are widely involved in the regulation of the immune system. PILRB2 is probably a cellular signaling activating receptor that associates with ITAM-bearing adapter molecules on the cell surface. This Mus musculus (Mouse) protein is Paired immunoglobulin-like type 2 receptor beta-2 (Pilrb2).